The primary structure comprises 128 residues: Translation initiation factor 5A (128 aa).

Lysine 35 carries the hypusine modification.

The protein belongs to the eIF-5A family.

Its subcellular location is the cytoplasm. In terms of biological role, functions by promoting the formation of the first peptide bond. In Archaeoglobus fulgidus (strain ATCC 49558 / DSM 4304 / JCM 9628 / NBRC 100126 / VC-16), this protein is Translation initiation factor 5A (eif5a).